Here is a 438-residue protein sequence, read N- to C-terminus: Glutaryl-CoA dehydrogenase, mitochondrial (438 aa).

A mitochondrion-targeting transit peptide spans 1–44; it reads MALRGVSVRLLSRGPGLHVLRTWVSSAAQTEKGGRTQSQLAKSS. Residues 138 to 139 and Ser186 contribute to the substrate site; that span reads RS. Residues 177 to 186 and 212 to 214 each bind FAD; these read FGLTEPNSGS and WIT. N6-acetyllysine is present on Lys240. Residue 287–294 coordinates substrate; it reads FGCLNNAR. Residues Arg319, Gln330, and 387–391 contribute to the FAD site; that span reads DMLGG. Glu414 serves as the catalytic Proton acceptor. Gly415 serves as a coordination point for substrate. Residues 416–418 and Phe434 each bind FAD; that span reads THD.

This sequence belongs to the acyl-CoA dehydrogenase family. Homotetramer. Requires FAD as cofactor. Isoform Long and isoform Short are expressed in fibroblasts and liver.

The protein resides in the mitochondrion matrix. The catalysed reaction is glutaryl-CoA + oxidized [electron-transfer flavoprotein] + 2 H(+) = (2E)-butenoyl-CoA + reduced [electron-transfer flavoprotein] + CO2. It functions in the pathway amino-acid metabolism; lysine degradation. Its pathway is amino-acid metabolism; tryptophan metabolism. Its activity is regulated as follows. Strongly inhibited by MCPA-CoA, a metabolite of hypoglycin which is present in unripened fruit of the ackee tree. In terms of biological role, catalyzes the oxidative decarboxylation of glutaryl-CoA to crotonyl-CoA and CO(2) in the degradative pathway of L-lysine, L-hydroxylysine, and L-tryptophan metabolism. It uses electron transfer flavoprotein as its electron acceptor. Isoform Short is inactive. This is Glutaryl-CoA dehydrogenase, mitochondrial (GCDH) from Homo sapiens (Human).